A 535-amino-acid polypeptide reads, in one-letter code: CTP synthase (535 aa).

Residues 300–535 form the Glutamine amidotransferase type-1 domain; that stretch reads RIGIVGKYAP…LVSASYERSK (236 aa). Residues Cys385, His509, and Glu511 each act as for GATase activity in the active site.

It belongs to the CTP synthase family.

It catalyses the reaction UTP + L-glutamine + ATP + H2O = CTP + L-glutamate + ADP + phosphate + 2 H(+). It participates in pyrimidine metabolism; CTP biosynthesis via de novo pathway; CTP from UDP: step 2/2. In terms of biological role, catalyzes the ATP-dependent amination of UTP to CTP with either L-glutamine or ammonia as the source of nitrogen. The sequence is that of CTP synthase from Encephalitozoon cuniculi (strain GB-M1) (Microsporidian parasite).